Here is a 42-residue protein sequence, read N- to C-terminus: Photosystem I reaction center subunit IX (42 aa).

A helical membrane pass occupies residues 8 to 28 (YLSTAPVLLTIWLSFTAALVI).

The protein belongs to the PsaJ family.

The protein resides in the plastid. It is found in the chloroplast thylakoid membrane. Its function is as follows. May help in the organization of the PsaE and PsaF subunits. This Guillardia theta (Cryptophyte) protein is Photosystem I reaction center subunit IX.